A 134-amino-acid chain; its full sequence is Photosystem II assembly factor lipoprotein Psb27 (134 aa).

The N-terminal stretch at 1–21 is a signal peptide; sequence MKRFWAMVCALFLSVSLLLTS. C22 carries N-palmitoyl cysteine lipidation. C22 carries the S-diacylglycerol cysteine lipid modification.

The protein belongs to the Psb27 family. Part of a photosystem II (PSII) assembly intermediate complex PSII-I; crystallized from a strain deleted of psbJ, it forms monomeric PSII before addition of the oxygen evolving complex. PSII-I includes 3 assembly factors not found in mature PSII (Psb27, Psb28 and Psb34). Binds to the lumenal side of PSII, adjacent to the CP43 (psbC) subunit.

The protein resides in the cellular thylakoid membrane. Its function is as follows. Plays a role in the repair and/or biogenesis of the calcium-manganese-oxide cluster on the lumenal face of the thylakoid membrane. Its presence in a photosystem II (PSII) preparation prevents binding of other extrinsic subunits PsbO, PsbU and PsbV, and thus assembly of calcium-manganese-oxide cluster. Psb27-containing complexes lack oxygen evolving activity and an oxidizable calcium-manganese-oxide cluster, but have a normal reaction center. The protein is Photosystem II assembly factor lipoprotein Psb27 of Thermosynechococcus vestitus (strain NIES-2133 / IAM M-273 / BP-1).